A 536-amino-acid chain; its full sequence is Zinc finger protein 394 (536 aa).

The disordered stretch occupies residues 18–45 (AVKVEEDSPGSQEPSGSGDWQNPETSRK). A Glycyl lysine isopeptide (Lys-Gly) (interchain with G-Cter in SUMO2) cross-link involves residue lysine 20. Residues 26–41 (PGSQEPSGSGDWQNPE) are compositionally biased toward polar residues. The SCAN box domain maps to 44–126 (RKQFRQLRYQ…ALARTLQRAL (83 aa)). In terms of domain architecture, KRAB spans 135–196 (ATFKDVAESL…KQEMSKEAES (62 aa)). Glycyl lysine isopeptide (Lys-Gly) (interchain with G-Cter in SUMO2) cross-links involve residues lysine 207 and lysine 260. 3 C2H2-type zinc fingers span residues 328–350 (YKCD…QRTH), 356–378 (YQCQ…QRTH), and 384–406 (YACP…QRTH). The C2H2-type 4; atypical zinc finger occupies 412–433 (CKCEECGEIFHISSLFKHQRLH). Lysine 413 participates in a covalent cross-link: Glycyl lysine isopeptide (Lys-Gly) (interchain with G-Cter in SUMO2). C2H2-type zinc fingers lie at residues 439–461 (HKCE…QRIH), 467–489 (YMCF…QRTH), and 495–517 (YKCF…QRIH).

Belongs to the krueppel C2H2-type zinc-finger protein family.

The protein localises to the nucleus. Its function is as follows. May be involved in transcriptional regulation. The sequence is that of Zinc finger protein 394 (Znf394) from Rattus norvegicus (Rat).